The following is a 138-amino-acid chain: Protein FAM136A (138 aa).

It belongs to the FAM136 family.

This chain is Protein FAM136A (fam136a), found in Xenopus laevis (African clawed frog).